The primary structure comprises 296 residues: Nucleotide-binding protein spr1424 (296 aa).

Position 13–20 (G13–T20) interacts with ATP. D63–S66 provides a ligand contact to GTP.

The protein belongs to the RapZ-like family.

Its function is as follows. Displays ATPase and GTPase activities. This chain is Nucleotide-binding protein spr1424, found in Streptococcus pneumoniae (strain ATCC BAA-255 / R6).